The following is a 470-amino-acid chain: 3-isopropylmalate dehydratase large subunit (470 aa).

Cysteine 351, cysteine 411, and cysteine 414 together coordinate [4Fe-4S] cluster.

Belongs to the aconitase/IPM isomerase family. LeuC type 1 subfamily. In terms of assembly, heterodimer of LeuC and LeuD. The cofactor is [4Fe-4S] cluster.

It catalyses the reaction (2R,3S)-3-isopropylmalate = (2S)-2-isopropylmalate. It participates in amino-acid biosynthesis; L-leucine biosynthesis; L-leucine from 3-methyl-2-oxobutanoate: step 2/4. Catalyzes the isomerization between 2-isopropylmalate and 3-isopropylmalate, via the formation of 2-isopropylmaleate. The protein is 3-isopropylmalate dehydratase large subunit of Rhodopseudomonas palustris (strain BisA53).